A 504-amino-acid polypeptide reads, in one-letter code: Lysine--tRNA ligase (504 aa).

E414 and E421 together coordinate Mg(2+).

This sequence belongs to the class-II aminoacyl-tRNA synthetase family. Homodimer. The cofactor is Mg(2+).

Its subcellular location is the cytoplasm. It carries out the reaction tRNA(Lys) + L-lysine + ATP = L-lysyl-tRNA(Lys) + AMP + diphosphate. In Photorhabdus laumondii subsp. laumondii (strain DSM 15139 / CIP 105565 / TT01) (Photorhabdus luminescens subsp. laumondii), this protein is Lysine--tRNA ligase.